A 179-amino-acid chain; its full sequence is Dynein light chain Tctex-type 5 (179 aa).

Belongs to the dynein light chain Tctex-type family. As to quaternary structure, interacts with ZMYND10.

The chain is Dynein light chain Tctex-type 5 (DYNLT5) from Homo sapiens (Human).